Reading from the N-terminus, the 982-residue chain is Chromosome partition protein Smc (982 aa).

Residue 33-40 coordinates ATP; the sequence is PNGSGKSN. 3 coiled-coil regions span residues 171–231, 280–310, and 337–377; these read RYTK…ELAV, SADMQSNELQKELQDIYQKINELEQRKVIID, and QTQL…QIEK. In terms of domain architecture, SMC hinge spans 416 to 535; sequence TGILNTLGTF…AKDLNSAINL (120 aa). Coiled-coil stretches lie at residues 575–718 and 753–822; these read SASL…SARE and VKLS…IASN.

It belongs to the SMC family. Homodimer.

It is found in the cytoplasm. In terms of biological role, required for chromosome condensation and partitioning. The sequence is that of Chromosome partition protein Smc from Mycoplasma genitalium (strain ATCC 33530 / DSM 19775 / NCTC 10195 / G37) (Mycoplasmoides genitalium).